The primary structure comprises 184 residues: Latex serine proteinase inhibitor (184 aa).

A disulfide bond links C45 and C89. N-linked (GlcNAc...) asparagine glycans are attached at residues N84 and N90. Cysteines 142 and 153 form a disulfide.

This sequence belongs to the protease inhibitor I3 (leguminous Kunitz-type inhibitor) family.

Its subcellular location is the secreted. The protein localises to the extracellular space. The sequence is that of Latex serine proteinase inhibitor from Carica papaya (Papaya).